The primary structure comprises 224 residues: 2,5-diamino-6-ribosylamino-4(3H)-pyrimidinone 5'-phosphate reductase (224 aa).

Residues Thr-57, Asp-61, 82–85 (STAN), Val-131, and 153–156 (GASI) contribute to the NADP(+) site.

It belongs to the HTP reductase family. In terms of assembly, homodimer.

The enzyme catalyses 2,5-diamino-6-(1-D-ribitylamino)pyrimidin-4(3H)-one 5'-phosphate + NADP(+) = 2,5-diamino-6-(1-D-ribosylamino)pyrimidin-4(3H)-one 5'-phosphate + NADPH + H(+). It carries out the reaction 2,5-diamino-6-(1-D-ribitylamino)pyrimidin-4(3H)-one 5'-phosphate + NAD(+) = 2,5-diamino-6-(1-D-ribosylamino)pyrimidin-4(3H)-one 5'-phosphate + NADH + H(+). The protein operates within cofactor biosynthesis; riboflavin biosynthesis. In terms of biological role, catalyzes an early step in riboflavin biosynthesis, the NADPH-dependent reduction of the ribose side chain of 2,5-diamino-6-ribosylamino-4(3H)-pyrimidinone 5'-phosphate, yielding 2,5-diamino-6-ribitylamino-4(3H)-pyrimidinone 5'-phosphate. The sequence is that of 2,5-diamino-6-ribosylamino-4(3H)-pyrimidinone 5'-phosphate reductase (ribD2) from Aquifex aeolicus (strain VF5).